Here is a 527-residue protein sequence, read N- to C-terminus: Gustatory receptor for bitter taste 66a (527 aa).

Topologically, residues 1–46 are cytoplasmic; sequence MAQAEDAVQPLLQQFQQLFFISKIAGILPQDLEKFRSRNLLEKSRN. A helical transmembrane segment spans residues 47-67; it reads GMIYMLSTLILYVVLYNILIY. Residues 68–80 lie on the Extracellular side of the membrane; it reads SFGEEDRSLKASQ. The helical transmembrane segment at 81-101 threads the bilayer; that stretch reads STLTFVIGLFLTYIGLIMMVS. The Cytoplasmic segment spans residues 102–144; the sequence is DQLTALRNQGRIGELYERIRLVDERLYKEGCVMDNSTIGRRIR. A helical transmembrane segment spans residues 145 to 165; that stretch reads IMLIMTVIFELSILVSTYVKL. Over 166 to 174 the chain is Extracellular; that stretch reads VDYSQWMSL. A helical membrane pass occupies residues 175-195; it reads LWIVSAIPTFINTLDKIWFAV. The Cytoplasmic segment spans residues 196-345; the sequence is SLYALKERFE…KALNELWSYP (150 aa). A helical transmembrane segment spans residues 346–366; it reads ILSLMAYGFLIFTAQLYFLYC. Residues 367–382 lie on the Extracellular side of the membrane; the sequence is ATQYQSIPSLFRSAKN. Residues 383–403 traverse the membrane as a helical segment; sequence PFITVIVLSYTSGKCVYLIYL. The Cytoplasmic portion of the chain corresponds to 404 to 460; the sequence is SWKTSQASKRTGISLHKCGVVADDNLLYEIVNHLSLKLLNHSVDFSACGFFTLDMET. Residues 461–481 form a helical membrane-spanning segment; sequence LYGVSGGITSYLIILIQFNLA. The Extracellular portion of the chain corresponds to 482–527; sequence AQQAKEAIQTFNSLNDTAGLVGAATDMDNISSTLRDFVTTTMTPAV. N-linked (GlcNAc...) asparagine glycans are attached at residues asparagine 496 and asparagine 510.

This sequence belongs to the insect chemoreceptor superfamily. Gustatory receptor (GR) family. Gr66a subfamily. As to expression, taste hairs in labial palps, labral and cibarial sense organs and forelegs. In larvae, is expressed in neurons of the terminal external chemosensory organ, as well as in the dorsal, ventral, and posterior pharyngeal sense organs.

It is found in the cell membrane. In terms of biological role, gustatory receptor required for response to the bitter in taste neurons. Gr66a cells respond to bitter compounds such as caffeine, theophylline, threonine or valine. Flies avoid bitter substances, suggesting that Gr66a neuron activity is sufficient to mediate avoidance behavior. Required for sensing and avoiding N,N-Diethyl-meta-toluamide (DEET), the most widely used insect repellent worldwide, as well as to L-canavanine, a plant-derived insecticide. Gr66a neurons are also involved in the sex-specific perception of molecules inducing male avoidance behavior, probably through sensing 7-tricosene (7-T), a male cuticular pheromone and leading to inhibition of male-male courtship. Finally, also plays a role in oviposition behavior, in which females evaluate their environment and choose to lay eggs on substrates they may find aversive in other contexts. The polypeptide is Gustatory receptor for bitter taste 66a (Gr66a) (Drosophila melanogaster (Fruit fly)).